The sequence spans 274 residues: Protein LIKE COV 3 (274 aa).

Over 1-60 the chain is Cytoplasmic; the sequence is METRERDLERLIPMHKSGASPRDVVLSVPPSPLASPIHVAGKEAIYKVIRSWASKKFMTG. Residues 61–81 traverse the membrane as a helical segment; the sequence is CVILLPIAVTFYFTWWFIHFV. Topologically, residues 82–93 are extracellular; sequence DGFFSPIYTHLG. A helical membrane pass occupies residues 94 to 114; it reads INMFGLGFVTSITFIFMVGVF. At 115–274 the chain is on the cytoplasmic side; sequence MSSWLGASVL…VCLSLVLAWT (160 aa).

This sequence belongs to the plant COV1 protein family.

It is found in the membrane. This is Protein LIKE COV 3 from Arabidopsis thaliana (Mouse-ear cress).